The sequence spans 159 residues: ATP synthase subunit b 2 (159 aa).

Residues 1 to 21 traverse the membrane as a helical segment; that stretch reads MDATFWALVALIIFVGILLYM.

This sequence belongs to the ATPase B chain family. As to quaternary structure, F-type ATPases have 2 components, F(1) - the catalytic core - and F(0) - the membrane proton channel. F(1) has five subunits: alpha(3), beta(3), gamma(1), delta(1), epsilon(1). F(0) has three main subunits: a(1), b(2) and c(10-14). The alpha and beta chains form an alternating ring which encloses part of the gamma chain. F(1) is attached to F(0) by a central stalk formed by the gamma and epsilon chains, while a peripheral stalk is formed by the delta and b chains.

Its subcellular location is the cell inner membrane. F(1)F(0) ATP synthase produces ATP from ADP in the presence of a proton or sodium gradient. F-type ATPases consist of two structural domains, F(1) containing the extramembraneous catalytic core and F(0) containing the membrane proton channel, linked together by a central stalk and a peripheral stalk. During catalysis, ATP synthesis in the catalytic domain of F(1) is coupled via a rotary mechanism of the central stalk subunits to proton translocation. Functionally, component of the F(0) channel, it forms part of the peripheral stalk, linking F(1) to F(0). The sequence is that of ATP synthase subunit b 2 from Chelativorans sp. (strain BNC1).